Consider the following 480-residue polypeptide: RAC-alpha serine/threonine-protein kinase (480 aa).

The 104-residue stretch at 5 to 108 (AIVKEGWLHK…WATAIQTVAD (104 aa)) folds into the PH domain. 2 positions are modified to N6-acetyllysine: lysine 14 and lysine 20. 14–19 (KRGEYI) contacts 1D-myo-inositol 1,3,4,5-tetrakisphosphate. 1D-myo-inositol 1,3,4,5-tetrakisphosphate contacts are provided by residues 23–25 (RPR) and asparagine 53. Cysteine 60 and cysteine 77 are oxidised to a cystine. Arginine 86 contacts 1D-myo-inositol 1,3,4,5-tetrakisphosphate. Positions 114–137 (EEETMDFRSGSPSDNSGAEEMEVS) are disordered. Phosphoserine is present on serine 124. Phosphoserine; alternate occurs at positions 126 and 129. O-linked (GlcNAc) serine; alternate glycosylation is found at serine 126 and serine 129. Residues 150–408 (FEYLKLLGKG…AKEIMQHRFF (259 aa)) enclose the Protein kinase domain. 156 to 164 (LGKGTFGKV) contacts ATP. A Phosphotyrosine; by TNK2 modification is found at tyrosine 176. Lysine 179 lines the ATP pocket. The active-site Proton acceptor is the aspartate 274. Lysine 284 is covalently cross-linked (Glycyl lysine isopeptide (Lys-Gly) (interchain with G-Cter in ubiquitin)). Cysteine 296 and cysteine 310 are oxidised to a cystine. Residue threonine 305 is glycosylated (O-linked (GlcNAc) threonine). The residue at position 308 (threonine 308) is a Phosphothreonine; by IKKE, PDPK1 and TBK1. Threonine 312 carries an O-linked (GlcNAc) threonine glycan. The AGC-kinase C-terminal domain maps to 409–480 (ANIVWQDVYE…QFSYSASGTA (72 aa)). Phosphothreonine is present on threonine 448. Position 450 is a phosphothreonine; by MTOR (threonine 450). The tract at residues 450–480 (TPPDQDDSMECVDSERRPHFPQFSYSASGTA) is disordered. Serine 473 carries an O-linked (GlcNAc) serine; alternate glycan. Serine 473 carries the phosphoserine; by IKKE, MTOR, PRKDC and TBK1; alternate modification. Phosphotyrosine is present on tyrosine 474. Phosphoserine; by CDK2 and MTOR is present on serine 477. At threonine 479 the chain carries Phosphothreonine; by CDK2 and MTOR.

Belongs to the protein kinase superfamily. AGC Ser/Thr protein kinase family. RAC subfamily. Interacts with and phosphorylated by PDPK1. Interacts with AGAP2 (isoform 2/PIKE-A); the interaction occurs in the presence of guanine nucleotides. Interacts with AKTIP. Interacts (via PH domain) with MTCP1, TCL1A and TCL1B. Interacts with CDKN1B; the interaction phosphorylates CDKN1B promoting 14-3-3 binding and cell-cycle progression. Interacts with MAP3K5 and TRAF6. Interacts with BAD, PPP2R5B, STK3 and STK4. Interacts (via PH domain) with SIRT1. Interacts with SRPK2 in a phosphorylation-dependent manner. Interacts with TRIM13; the interaction ubiquitinates AKT1 leading to its proteasomal degradation. Interacts with RAF1. Interacts (via the C-terminus) with CCDC88A (via its C-terminus) and THEM4 (via its C-terminus). Interacts with GRB10; the interaction leads to GRB10 phosphorylation thus promoting YWHAE-binding. Interacts with KCTD20. Interacts with BTBD10. Interacts with PA2G4. Interacts with KIF14; the interaction is detected in the plasma membrane upon INS stimulation and promotes AKT1 phosphorylation. Interacts with FAM83B; activates the PI3K/AKT signaling cascade. Interacts with WDFY2 (via WD repeats 1-3). Forms a complex with WDFY2 and FOXO1. Interacts with FAM168A. Interacts with SYAP1 (via phosphorylated form and BSD domain); this interaction is enhanced in a mTORC2-mediated manner in response to epidermal growth factor (EGF) stimulation and activates AKT1. Interacts with PKHM3. Interacts with FKBP5/FKBP51; promoting interaction between Akt/AKT1 and PHLPP1, thereby enhancing dephosphorylation and subsequent activation of Akt/AKT1. Interacts with TMEM175; leading to formation of the lysoK(GF) complex. O-GlcNAcylation at Thr-305 and Thr-312 inhibits activating phosphorylation at Thr-308 via disrupting the interaction between AKT1 and PDPK1. O-GlcNAcylation at Ser-473 also probably interferes with phosphorylation at this site. Post-translationally, phosphorylation on Thr-308, Ser-473 and Tyr-474 is required for full activity. Phosphorylation of the activation loop at Thr-308 by PDPK1/PDK1 is a prerequisite for full activation. Phosphorylation by mTORC2 in response to growth factors plays a key role in AKT1 activation: mTORC2 phosphorylates different sites depending on the context, such as Thr-450, Ser-473, Ser-477 or Thr-479, thereby facilitating subsequent phosphorylation of the activation loop by PDPK1/PDK1. Phosphorylation at Ser-473 by mTORC2 promotes ubiquitination and degradation by the proteasome. Also phosphorylated at Ser-477 and Thr-479 by CDK2, facilitating subsequent phosphorylation of the activation loop by PDPK1/PDK1. Activated TNK2 phosphorylates it on Tyr-176 resulting in its binding to the anionic plasma membrane phospholipid PA. This phosphorylated form localizes to the cell membrane, where it is targeted by PDPK1 and PDPK2 for further phosphorylations on Thr-308 and Ser-473 leading to its activation. Phosphorylated at Thr-308 and Ser-473 by IKBKE and TBK1. Ser-473 phosphorylation is enhanced by interaction with AGAP2 isoform 2 (PIKE-A). Ser-473 phosphorylation is enhanced by signaling through activated FLT3. Ser-473 is dephosphorylated by PHLPP. Dephosphorylated at Thr-308 and Ser-473 by PP2A phosphatase. The phosphorylated form of PPP2R5B is required for bridging AKT1 with PP2A phosphatase. Ser-473 is dephosphorylated by CPPED1, leading to termination of signaling. AIM2 acts as an inhibitor of AKT1 by inhibiting phosphorylation Ser-473: AIM2 acts both by inhibiting the activity of PRKDC/DNA-PK kinase and promoting dephosphorylation by PP2A phosphatase. In terms of processing, ubiquitinated; undergoes both 'Lys-48'- and 'Lys-63'-linked polyubiquitination. TRAF6-induced 'Lys-63'-linked AKT1 ubiquitination is critical for phosphorylation and activation. When ubiquitinated, it translocates to the plasma membrane, where it becomes phosphorylated. When fully phosphorylated and translocated into the nucleus, undergoes 'Lys-48'-polyubiquitination catalyzed by TTC3, leading to its degradation by the proteasome. Also ubiquitinated by TRIM13 leading to its proteasomal degradation. Ubiquitinated via 'Lys-48'-linked polyubiquitination by ZNRF1, leading to its degradation by the proteasome. Phosphorylated, undergoes 'Lys-48'-linked polyubiquitination preferentially at Lys-284 catalyzed by MUL1, leading to its proteasomal degradation. Acetylated on Lys-14 and Lys-20 by the histone acetyltransferases EP300 and KAT2B. Acetylation results in reduced phosphorylation and inhibition of activity. Deacetylated at Lys-14 and Lys-20 by SIRT1. SIRT1-mediated deacetylation relieves the inhibition. Post-translationally, cleavage by caspase-3/CASP3. Cleaved at the caspase-3 consensus site Asp-462 during apoptosis, resulting in down-regulation of the AKT signaling pathway and decreased cell survival. Widely expressed. Low levels found in liver with slightly higher levels present in thymus and testis.

The protein localises to the cytoplasm. Its subcellular location is the nucleus. The protein resides in the cell membrane. It is found in the mitochondrion intermembrane space. The enzyme catalyses L-seryl-[protein] + ATP = O-phospho-L-seryl-[protein] + ADP + H(+). The catalysed reaction is L-threonyl-[protein] + ATP = O-phospho-L-threonyl-[protein] + ADP + H(+). Three specific sites, one in the kinase domain (Thr-308) and the two other ones in the C-terminal regulatory region (Ser-473 and Tyr-474), need to be phosphorylated for its full activation. AKT1 is one of 3 closely related serine/threonine-protein kinases (AKT1, AKT2 and AKT3) called the AKT kinase, and which regulate many processes including metabolism, proliferation, cell survival, growth and angiogenesis. This is mediated through serine and/or threonine phosphorylation of a range of downstream substrates. Over 100 substrate candidates have been reported so far, but for most of them, no isoform specificity has been reported. AKT is responsible of the regulation of glucose uptake by mediating insulin-induced translocation of the SLC2A4/GLUT4 glucose transporter to the cell surface. Phosphorylation of PTPN1 at 'Ser-50' negatively modulates its phosphatase activity preventing dephosphorylation of the insulin receptor and the attenuation of insulin signaling. Phosphorylation of TBC1D4 triggers the binding of this effector to inhibitory 14-3-3 proteins, which is required for insulin-stimulated glucose transport. AKT also regulates the storage of glucose in the form of glycogen by phosphorylating GSK3A at 'Ser-21' and GSK3B at 'Ser-9', resulting in inhibition of its kinase activity. Phosphorylation of GSK3 isoforms by AKT is also thought to be one mechanism by which cell proliferation is driven. AKT also regulates cell survival via the phosphorylation of MAP3K5 (apoptosis signal-related kinase). Phosphorylation of 'Ser-83' decreases MAP3K5 kinase activity stimulated by oxidative stress and thereby prevents apoptosis. AKT mediates insulin-stimulated protein synthesis by phosphorylating TSC2 at 'Ser-939' and 'Thr-1462', thereby activating the mTORC1 signaling pathway, and leading to both phosphorylation of 4E-BP1 and in activation of RPS6KB1. Also regulates the mTORC1 signaling pathway by catalyzing phosphorylation of CASTOR1 and DEPDC5. AKT plays a role as key modulator of the AKT-mTOR signaling pathway controlling the tempo of the process of newborn neurons integration during adult neurogenesis, including correct neuron positioning, dendritic development and synapse formation. Part of a positive feedback loop of mTORC2 signaling by mediating phosphorylation of MAPKAP1/SIN1, promoting mTORC2 activation. AKT is involved in the phosphorylation of members of the FOXO factors (Forkhead family of transcription factors), leading to binding of 14-3-3 proteins and cytoplasmic localization. In particular, FOXO1 is phosphorylated at 'Thr-24', 'Ser-256' and 'Ser-319'. FOXO3 and FOXO4 are phosphorylated on equivalent sites. AKT has an important role in the regulation of NF-kappa-B-dependent gene transcription and positively regulates the activity of CREB1 (cyclic AMP (cAMP)-response element binding protein). The phosphorylation of CREB1 induces the binding of accessory proteins that are necessary for the transcription of pro-survival genes such as BCL2 and MCL1. AKT phosphorylates 'Ser-454' on ATP citrate lyase (ACLY), thereby potentially regulating ACLY activity and fatty acid synthesis. Activates the 3B isoform of cyclic nucleotide phosphodiesterase (PDE3B) via phosphorylation of 'Ser-273', resulting in reduced cyclic AMP levels and inhibition of lipolysis. Phosphorylates PIKFYVE on 'Ser-318', which results in increased PI(3)P-5 activity. The Rho GTPase-activating protein DLC1 is another substrate and its phosphorylation is implicated in the regulation cell proliferation and cell growth. Signals downstream of phosphatidylinositol 3-kinase (PI(3)K) to mediate the effects of various growth factors such as platelet-derived growth factor (PDGF), epidermal growth factor (EGF), insulin and insulin-like growth factor 1 (IGF1). AKT mediates the antiapoptotic effects of IGF1. Essential for the SPATA13-mediated regulation of cell migration and adhesion assembly and disassembly. May be involved in the regulation of the placental development. Phosphorylates STK4/MST1 at 'Thr-120' and 'Thr-387' leading to inhibition of its: kinase activity, nuclear translocation, autophosphorylation and ability to phosphorylate FOXO3. Phosphorylates STK3/MST2 at 'Thr-117' and 'Thr-384' leading to inhibition of its: cleavage, kinase activity, autophosphorylation at Thr-180, binding to RASSF1 and nuclear translocation. Phosphorylates SRPK2 and enhances its kinase activity towards SRSF2 and ACIN1 and promotes its nuclear translocation. Phosphorylates RAF1 at 'Ser-259' and negatively regulates its activity. Phosphorylation of BAD stimulates its pro-apoptotic activity. Phosphorylates KAT6A at 'Thr-369' and this phosphorylation inhibits the interaction of KAT6A with PML and negatively regulates its acetylation activity towards p53/TP53. Phosphorylates palladin (PALLD), modulating cytoskeletal organization and cell motility. Phosphorylates prohibitin (PHB), playing an important role in cell metabolism and proliferation. Phosphorylates CDKN1A, for which phosphorylation at 'Thr-145' induces its release from CDK2 and cytoplasmic relocalization. These recent findings indicate that the AKT1 isoform has a more specific role in cell motility and proliferation. Phosphorylates CLK2 thereby controlling cell survival to ionizing radiation. Phosphorylates PCK1 at 'Ser-90', reducing the binding affinity of PCK1 to oxaloacetate and changing PCK1 into an atypical protein kinase activity using GTP as donor. Also acts as an activator of TMEM175 potassium channel activity in response to growth factors: forms the lysoK(GF) complex together with TMEM175 and acts by promoting TMEM175 channel activation, independently of its protein kinase activity. Acts as a negative regulator of the cGAS-STING pathway by mediating phosphorylation of CGAS during mitosis, leading to its inhibition. Acts as a regulator of mitochondrial calcium uptake by mediating phosphorylation of MICU1 in the mitochondrial intermembrane space, impairing MICU1 maturation. Acts as an inhibitor of tRNA methylation by mediating phosphorylation of the N-terminus of METTL1, thereby inhibiting METTL1 methyltransferase activity. In response to LPAR1 receptor pathway activation, phosphorylates Rabin8/RAB3IP which alters its activity and phosphorylates WDR44 which induces WDR44 binding to Rab11, thereby switching Rab11 vesicular function from preciliary trafficking to endocytic recycling. In Mus musculus (Mouse), this protein is RAC-alpha serine/threonine-protein kinase (Akt1).